A 466-amino-acid chain; its full sequence is Transcription factor SOX-10 (466 aa).

Residues 1–67 form a disordered region; sequence MAEEQDLSEV…QQDGEADDDK (67 aa). A compositionally biased stretch (low complexity) spans 23 to 32; it reads LSPGSAPSLG. Ser24 is subject to Phosphoserine. Residues 62 to 102 form a dimerization (DIM) region; sequence EADDDKFPVCIREAVSQVLSGYDWTLVPMPVRVNGASKSKP. Residues 104-172 constitute a DNA-binding region (HMG box); the sequence is VKRPMNAFMV…QHKKDHPDYK (69 aa). A Nuclear export signal motif is present at residues 134–145; that stretch reads LSKTLGKLWRLL. 2 stretches are compositionally biased toward basic and acidic residues: residues 160-173 and 254-271; these read LRMQHKKDHPDYKY and ADPKRDGRSMGEGGKPHI. 4 disordered regions span residues 160–199, 212–274, 354–375, and 433–466; these read LRMQHKKDHPDYKYQPRRRKNGKAAQGEAECPGGEAEQGG, LDHR…IDFG, AQVKTETAGPQGPPHYTDQPST, and RPLYTAISDPSPSGPQSHSPTHWEQPVYTTLSRP. Residues 228 to 310 form a transactivation domain (TAM) region; it reads PEHPSGQSHG…LPPNGHPGHV (83 aa). The interval 353–466 is transactivation domain (TAC); sequence KAQVKTETAG…QPVYTTLSRP (114 aa). The span at 440-466 shows a compositional bias: polar residues; sequence SDPSPSGPQSHSPTHWEQPVYTTLSRP.

As to quaternary structure, monomer. Interacts with ARMCX3 at the mitochondrial outer membrane surface. Interacts with PAX3. Expressed in fetal brain and in adult brain, heart, small intestine and colon.

The protein resides in the cytoplasm. Its subcellular location is the nucleus. It localises to the mitochondrion outer membrane. In terms of biological role, transcription factor that plays a central role in developing and mature glia. Specifically activates expression of myelin genes, during oligodendrocyte (OL) maturation, such as DUSP15 and MYRF, thereby playing a central role in oligodendrocyte maturation and CNS myelination. Once induced, MYRF cooperates with SOX10 to implement the myelination program. Transcriptional activator of MITF, acting synergistically with PAX3. Transcriptional activator of MBP, via binding to the gene promoter. The sequence is that of Transcription factor SOX-10 (SOX10) from Homo sapiens (Human).